A 390-amino-acid chain; its full sequence is Chorismate synthase (390 aa).

Residues R39 and R45 each coordinate NADP(+). Residues 132–134, 253–254, G298, 313–317, and R339 contribute to the FMN site; these read RSS, NA, and KPIPT.

The protein belongs to the chorismate synthase family. As to quaternary structure, homotetramer. Requires FMNH2 as cofactor.

It carries out the reaction 5-O-(1-carboxyvinyl)-3-phosphoshikimate = chorismate + phosphate. Its pathway is metabolic intermediate biosynthesis; chorismate biosynthesis; chorismate from D-erythrose 4-phosphate and phosphoenolpyruvate: step 7/7. In terms of biological role, catalyzes the anti-1,4-elimination of the C-3 phosphate and the C-6 proR hydrogen from 5-enolpyruvylshikimate-3-phosphate (EPSP) to yield chorismate, which is the branch point compound that serves as the starting substrate for the three terminal pathways of aromatic amino acid biosynthesis. This reaction introduces a second double bond into the aromatic ring system. The chain is Chorismate synthase from Bacillus subtilis (strain 168).